Consider the following 127-residue polypeptide: Large ribosomal subunit protein bL21 (127 aa).

This sequence belongs to the bacterial ribosomal protein bL21 family. Part of the 50S ribosomal subunit. Contacts protein L20.

Functionally, this protein binds to 23S rRNA in the presence of protein L20. The protein is Large ribosomal subunit protein bL21 of Synechococcus sp. (strain ATCC 27144 / PCC 6301 / SAUG 1402/1) (Anacystis nidulans).